A 227-amino-acid polypeptide reads, in one-letter code: Cytidylate kinase (227 aa).

Position 12–20 (glycine 12–threonine 20) interacts with ATP.

The protein belongs to the cytidylate kinase family. Type 1 subfamily.

It localises to the cytoplasm. It carries out the reaction CMP + ATP = CDP + ADP. It catalyses the reaction dCMP + ATP = dCDP + ADP. This Erwinia tasmaniensis (strain DSM 17950 / CFBP 7177 / CIP 109463 / NCPPB 4357 / Et1/99) protein is Cytidylate kinase.